Reading from the N-terminus, the 481-residue chain is Rhamnogalacturonan I rhamnosyltransferase 4 (481 aa).

The helical; Signal-anchor for type II membrane protein transmembrane segment at 33-55 (VWFFRVCSCILVWTCLIQLFWHS) threads the bilayer. N-linked (GlcNAc...) asparagine glycans are attached at residues Asn85 and Asn118. 258–260 (HLR) provides a ligand contact to substrate. Asn372 and Asn432 each carry an N-linked (GlcNAc...) asparagine glycan.

Belongs to the glycosyltransferase GT106 family.

It is found in the golgi apparatus membrane. It catalyses the reaction alpha-D-galacturonosyl-[(1-&gt;2)-alpha-L-rhamnosyl-(1-&gt;4)-alpha-D-galacturonosyl](n) + UDP-beta-L-rhamnose = [(1-&gt;2)-alpha-L-rhamnosyl-(1-&gt;4)-alpha-D-galacturonosyl](n+1) + UDP + H(+). Its pathway is glycan metabolism; pectin biosynthesis. Glycosyltransferase involved in the formation of rhamnogalacturonan I (RG-I) oligosaccharides in the seed coat mucilage, which is a specialized cell wall with abundant RG-I. Transfers the rhamnose residue from UDP-beta-L-rhamnose to RG-I oligosaccharides. The chain is Rhamnogalacturonan I rhamnosyltransferase 4 from Arabidopsis thaliana (Mouse-ear cress).